A 485-amino-acid polypeptide reads, in one-letter code: NADH-quinone oxidoreductase subunit N (485 aa).

The next 14 membrane-spanning stretches (helical) occupy residues 8 to 28 (LIALLPLLIVGLTVVVVMLSI), 35 to 55 (FLNATLSVIGLNAALVSLWFV), 71 to 91 (GFAMLYTGLVLLASLATCTFA), 105 to 125 (FYLLVLIAALGGILLANANHL), 127 to 147 (SLFLGIELISLPLFGLVGYAF), 159 to 179 (YTILSAAASSFLLFGMALVYA), 203 to 223 (LLAGFGLMIVGLGFKLSLVPF), 235 to 255 (PAPVSTFLATASKIAIFGVVM), 271 to 291 (VVLAIIAFASIIFGNLMALSQ), 297 to 317 (LLGYSSISHLGYLLVALIALQ), 326 to 346 (VGVYLAGYLFSSLGAFGVVSL), 373 to 393 (AAVMTVMMLSLAGIPMTLGFI), 408 to 430 (WWLVGAVVVGSAIGLYYYLRVAV), and 455 to 475 (IVVLISALLVLVLGIWPQPLI).

This sequence belongs to the complex I subunit 2 family. As to quaternary structure, NDH-1 is composed of 13 different subunits. Subunits NuoA, H, J, K, L, M, N constitute the membrane sector of the complex.

It localises to the cell inner membrane. It catalyses the reaction a quinone + NADH + 5 H(+)(in) = a quinol + NAD(+) + 4 H(+)(out). In terms of biological role, NDH-1 shuttles electrons from NADH, via FMN and iron-sulfur (Fe-S) centers, to quinones in the respiratory chain. The immediate electron acceptor for the enzyme in this species is believed to be ubiquinone. Couples the redox reaction to proton translocation (for every two electrons transferred, four hydrogen ions are translocated across the cytoplasmic membrane), and thus conserves the redox energy in a proton gradient. The chain is NADH-quinone oxidoreductase subunit N from Escherichia coli O7:K1 (strain IAI39 / ExPEC).